A 356-amino-acid polypeptide reads, in one-letter code: Tyrosine recombinase XerS (356 aa).

One can recognise a Core-binding (CB) domain in the interval 16 to 121 (IMPWYVLDYY…ALSSLYKYLT (106 aa)). One can recognise a Tyr recombinase domain in the interval 169–354 (AFLDYVDKEY…VNDEQKNALD (186 aa)). Residues R210, K234, H306, R309, and H332 contribute to the active site. Y341 serves as the catalytic O-(3'-phospho-DNA)-tyrosine intermediate.

It belongs to the 'phage' integrase family. XerS subfamily.

The protein localises to the cytoplasm. FtsK is required for recombination. Functionally, site-specific tyrosine recombinase, which acts by catalyzing the cutting and rejoining of the recombining DNA molecules. Essential to convert dimers of the bacterial chromosome into monomers to permit their segregation at cell division. The polypeptide is Tyrosine recombinase XerS (Streptococcus pyogenes serotype M18 (strain MGAS8232)).